A 337-amino-acid chain; its full sequence is Putative tRNA (cytidine(32)/guanosine(34)-2'-O)-methyltransferase (337 aa).

S-adenosyl-L-methionine is bound by residues G53, W55, D76, D92, and D117. K157 functions as the Proton acceptor in the catalytic mechanism. Basic and acidic residues-rich tracts occupy residues 304 to 318 (LKAELSRGKDQKKTP) and 327 to 337 (ELEKAAEKFQL). A disordered region spans residues 304 to 337 (LKAELSRGKDQKKTPAENVPSVEELEKAAEKFQL).

The protein belongs to the class I-like SAM-binding methyltransferase superfamily. RNA methyltransferase RlmE family. TRM7 subfamily.

It localises to the cytoplasm. It carries out the reaction cytidine(32)/guanosine(34) in tRNA + 2 S-adenosyl-L-methionine = 2'-O-methylcytidine(32)/2'-O-methylguanosine(34) in tRNA + 2 S-adenosyl-L-homocysteine + 2 H(+). Functionally, methylates the 2'-O-ribose of nucleotides at positions 32 and 34 of the tRNA anticodon loop of substrate tRNAs. The polypeptide is Putative tRNA (cytidine(32)/guanosine(34)-2'-O)-methyltransferase (Caenorhabditis elegans).